A 126-amino-acid polypeptide reads, in one-letter code: Protein ApaG (126 aa).

One can recognise an ApaG domain in the interval 2–126; it reads SALDNSIRVE…FRLATPGLLH (125 aa).

The polypeptide is Protein ApaG (Shewanella oneidensis (strain ATCC 700550 / JCM 31522 / CIP 106686 / LMG 19005 / NCIMB 14063 / MR-1)).